A 599-amino-acid chain; its full sequence is Elongation factor 4 (599 aa).

One can recognise a tr-type G domain in the interval 4–186 (ENIRNFSIIA…EIVKKIPPPE (183 aa)). GTP is bound by residues 16-21 (DHGKST) and 133-136 (NKID).

Belongs to the TRAFAC class translation factor GTPase superfamily. Classic translation factor GTPase family. LepA subfamily.

The protein localises to the cell inner membrane. The catalysed reaction is GTP + H2O = GDP + phosphate + H(+). Its function is as follows. Required for accurate and efficient protein synthesis under certain stress conditions. May act as a fidelity factor of the translation reaction, by catalyzing a one-codon backward translocation of tRNAs on improperly translocated ribosomes. Back-translocation proceeds from a post-translocation (POST) complex to a pre-translocation (PRE) complex, thus giving elongation factor G a second chance to translocate the tRNAs correctly. Binds to ribosomes in a GTP-dependent manner. The sequence is that of Elongation factor 4 from Geobacter metallireducens (strain ATCC 53774 / DSM 7210 / GS-15).